A 327-amino-acid chain; its full sequence is MAAPVTKKPILLEFEKPLVELEERITQIRTLAADNQVDVSGQIQQLEARAIQLRREIFSNLSPAQRIQVARHPRRPSTLDYIQAISDEWIELHGDRNGSDDLALVGGVGALDGQPVVFLGHQKGRDTKDNVLRNFGMASPGGYRKALRLMEHADRFGMPILTFIDTPGAYAGVSAEELGQGEAIAVNLREMFRFSVPILCTVIGEGGSGGALGIGVGDRLLMFEHSVYTVASPEACASILWRDAGKAAQAAEALKITARDLKQLGILDEIITEPLGGAHSAPLETAQSLRQVLLRHLKDLQALSPAQLREQRYQKFRQLGVFLESSD.

One can recognise a CoA carboxyltransferase C-terminal domain in the interval 46–299 (LEARAIQLRR…RQVLLRHLKD (254 aa)).

This sequence belongs to the AccA family. As to quaternary structure, acetyl-CoA carboxylase is a heterohexamer composed of biotin carboxyl carrier protein (AccB), biotin carboxylase (AccC) and two subunits each of ACCase subunit alpha (AccA) and ACCase subunit beta (AccD).

The protein localises to the cytoplasm. The enzyme catalyses N(6)-carboxybiotinyl-L-lysyl-[protein] + acetyl-CoA = N(6)-biotinyl-L-lysyl-[protein] + malonyl-CoA. Its pathway is lipid metabolism; malonyl-CoA biosynthesis; malonyl-CoA from acetyl-CoA: step 1/1. Its function is as follows. Component of the acetyl coenzyme A carboxylase (ACC) complex. First, biotin carboxylase catalyzes the carboxylation of biotin on its carrier protein (BCCP) and then the CO(2) group is transferred by the carboxyltransferase to acetyl-CoA to form malonyl-CoA. This Synechococcus elongatus (strain ATCC 33912 / PCC 7942 / FACHB-805) (Anacystis nidulans R2) protein is Acetyl-coenzyme A carboxylase carboxyl transferase subunit alpha.